The primary structure comprises 218 residues: Thiopurine S-methyltransferase (218 aa).

The S-adenosyl-L-methionine site is built by tryptophan 10, leucine 45, glutamate 66, and arginine 123.

Belongs to the class I-like SAM-binding methyltransferase superfamily. TPMT family.

It is found in the cytoplasm. It catalyses the reaction S-adenosyl-L-methionine + a thiopurine = S-adenosyl-L-homocysteine + a thiopurine S-methylether.. The protein is Thiopurine S-methyltransferase of Shewanella sp. (strain MR-7).